A 165-amino-acid chain; its full sequence is ATP synthase subunit b (165 aa).

A helical transmembrane segment spans residues 5 to 27; it reads INSTTLGNIIITLGSVFLLYYLI.

The protein belongs to the ATPase B chain family. In terms of assembly, F-type ATPases have 2 components, F(1) - the catalytic core - and F(0) - the membrane proton channel. F(1) has five subunits: alpha(3), beta(3), gamma(1), delta(1), epsilon(1). F(0) has three main subunits: a(1), b(2) and c(10-14). The alpha and beta chains form an alternating ring which encloses part of the gamma chain. F(1) is attached to F(0) by a central stalk formed by the gamma and epsilon chains, while a peripheral stalk is formed by the delta and b chains.

Its subcellular location is the cell membrane. Functionally, f(1)F(0) ATP synthase produces ATP from ADP in the presence of a proton or sodium gradient. F-type ATPases consist of two structural domains, F(1) containing the extramembraneous catalytic core and F(0) containing the membrane proton channel, linked together by a central stalk and a peripheral stalk. During catalysis, ATP synthesis in the catalytic domain of F(1) is coupled via a rotary mechanism of the central stalk subunits to proton translocation. In terms of biological role, component of the F(0) channel, it forms part of the peripheral stalk, linking F(1) to F(0). This is ATP synthase subunit b from Streptococcus thermophilus (strain CNRZ 1066).